Here is a 191-residue protein sequence, read N- to C-terminus: Large ribosomal subunit protein uL6 (191 aa).

The protein belongs to the universal ribosomal protein uL6 family. Part of the 50S ribosomal subunit.

Functionally, this protein binds to the 23S rRNA, and is important in its secondary structure. It is located near the subunit interface in the base of the L7/L12 stalk, and near the tRNA binding site of the peptidyltransferase center. The chain is Large ribosomal subunit protein uL6 from Gloeobacter violaceus (strain ATCC 29082 / PCC 7421).